Here is a 408-residue protein sequence, read N- to C-terminus: Intracellular coagulation inhibitor 2 (408 aa).

The signal sequence occupies residues 1–22; the sequence is MLSRRTLDCCLVMLIVSTTFCQ. Cysteines 50 and 249 form a disulfide. N-linked (GlcNAc...) asparagine glycosylation is present at N174.

The protein belongs to the serpin family. As to quaternary structure, monomer. Forms a covalent heterodimer with clotting factor C chain B. Forms a covalent heterodimer with proclotting enzyme heavy chain. Specifically expressed in hemocytes (at protein level).

The protein localises to the secreted. Its function is as follows. Serine protease inhibitor that inhibits proclotting enzyme and to a lesser extent clotting factor C and clotting factor G. In Tachypleus tridentatus (Japanese horseshoe crab), this protein is Intracellular coagulation inhibitor 2.